The chain runs to 344 residues: Protein pelota homolog (344 aa).

This sequence belongs to the eukaryotic release factor 1 family. Pelota subfamily. As to quaternary structure, monomer. A divalent metal cation is required as a cofactor.

Its subcellular location is the cytoplasm. In terms of biological role, may function in recognizing stalled ribosomes, interact with stem-loop structures in stalled mRNA molecules, and effect endonucleolytic cleavage of the mRNA. May play a role in the release non-functional ribosomes and degradation of damaged mRNAs. Has endoribonuclease activity. This chain is Protein pelota homolog, found in Saccharolobus islandicus (strain M.14.25 / Kamchatka #1) (Sulfolobus islandicus).